Consider the following 424-residue polypeptide: UDP-N-acetylglucosamine 1-carboxyvinyltransferase 3 (424 aa).

A phosphoenolpyruvate-binding site is contributed by 22-23 (KN). Residue Arg-94 participates in UDP-N-acetyl-alpha-D-glucosamine binding. The active-site Proton donor is the Asp-118. UDP-N-acetyl-alpha-D-glucosamine is bound by residues 123 to 127 (RPVDQ), Asp-306, and Leu-328.

Belongs to the EPSP synthase family. MurA subfamily.

It is found in the cytoplasm. The enzyme catalyses phosphoenolpyruvate + UDP-N-acetyl-alpha-D-glucosamine = UDP-N-acetyl-3-O-(1-carboxyvinyl)-alpha-D-glucosamine + phosphate. Its pathway is cell wall biogenesis; peptidoglycan biosynthesis. In terms of biological role, cell wall formation. Adds enolpyruvyl to UDP-N-acetylglucosamine. The polypeptide is UDP-N-acetylglucosamine 1-carboxyvinyltransferase 3 (Symbiobacterium thermophilum (strain DSM 24528 / JCM 14929 / IAM 14863 / T)).